The following is a 766-amino-acid chain: 5-methyltetrahydropteroyltriglutamate--homocysteine methyltransferase (766 aa).

Residues 16 to 19 (RELK) and K119 each bind 5-methyltetrahydropteroyltri-L-glutamate. L-homocysteine is bound by residues 440–442 (IGS) and E493. Residues 440-442 (IGS) and E493 each bind L-methionine. Residues 524–525 (RC) and W570 each bind 5-methyltetrahydropteroyltri-L-glutamate. L-homocysteine is bound at residue D608. D608 lines the L-methionine pocket. E614 lines the 5-methyltetrahydropteroyltri-L-glutamate pocket. Zn(2+)-binding residues include H650, C652, and E674. H703 functions as the Proton donor in the catalytic mechanism. Position 735 (C735) interacts with Zn(2+).

It belongs to the vitamin-B12 independent methionine synthase family. Zn(2+) is required as a cofactor.

The catalysed reaction is 5-methyltetrahydropteroyltri-L-glutamate + L-homocysteine = tetrahydropteroyltri-L-glutamate + L-methionine. Its pathway is amino-acid biosynthesis; L-methionine biosynthesis via de novo pathway; L-methionine from L-homocysteine (MetE route): step 1/1. Its function is as follows. Catalyzes the transfer of a methyl group from 5-methyltetrahydrofolate to homocysteine resulting in methionine formation. This is 5-methyltetrahydropteroyltriglutamate--homocysteine methyltransferase from Pseudomonas aeruginosa (strain ATCC 15692 / DSM 22644 / CIP 104116 / JCM 14847 / LMG 12228 / 1C / PRS 101 / PAO1).